The primary structure comprises 477 residues: ATP synthase subunit beta (477 aa).

163-170 is an ATP binding site; the sequence is GGAGVGKT.

The protein belongs to the ATPase alpha/beta chains family. F-type ATPases have 2 components, CF(1) - the catalytic core - and CF(0) - the membrane proton channel. CF(1) has five subunits: alpha(3), beta(3), gamma(1), delta(1), epsilon(1). CF(0) has four main subunits: a(1), b(1), b'(1) and c(9-12).

It localises to the cellular thylakoid membrane. It carries out the reaction ATP + H2O + 4 H(+)(in) = ADP + phosphate + 5 H(+)(out). In terms of biological role, produces ATP from ADP in the presence of a proton gradient across the membrane. The catalytic sites are hosted primarily by the beta subunits. The protein is ATP synthase subunit beta of Synechococcus sp. (strain JA-2-3B'a(2-13)) (Cyanobacteria bacterium Yellowstone B-Prime).